The primary structure comprises 250 residues: 5-oxoprolinase subunit A (250 aa).

It belongs to the LamB/PxpA family. As to quaternary structure, forms a complex composed of PxpA, PxpB and PxpC.

The catalysed reaction is 5-oxo-L-proline + ATP + 2 H2O = L-glutamate + ADP + phosphate + H(+). In terms of biological role, catalyzes the cleavage of 5-oxoproline to form L-glutamate coupled to the hydrolysis of ATP to ADP and inorganic phosphate. The chain is 5-oxoprolinase subunit A from Pseudomonas fluorescens (strain Pf0-1).